The sequence spans 55 residues: Cortexin domain containing 2 (55 aa).

A helical transmembrane segment spans residues 16–36 (FAIAFVVLLFLFLIVMIFRCA).

Its subcellular location is the membrane. This chain is Cortexin domain containing 2, found in Homo sapiens (Human).